A 115-amino-acid polypeptide reads, in one-letter code: MARGGFPGGGFGGNMNNLMKQAQKMQKDMEKAQQDLENKTIEVSVGGGAINIVATGKKEIKEITIKPEVVDPDDVEMLQDLILSAVNEALRKADELANSEMSKITGGLGGLPGMF.

The protein belongs to the YbaB/EbfC family. Homodimer.

The protein resides in the cytoplasm. It localises to the nucleoid. Functionally, binds to DNA and alters its conformation. May be involved in regulation of gene expression, nucleoid organization and DNA protection. This chain is Nucleoid-associated protein Ccel_0243, found in Ruminiclostridium cellulolyticum (strain ATCC 35319 / DSM 5812 / JCM 6584 / H10) (Clostridium cellulolyticum).